The sequence spans 500 residues: MALLIGDGLWSGVIFTALFLLLVDLMHRRKFWRARYPPGPMPLPGLGNLLQVDFEHMPYSLYKFRQRYGDVFSLQMAWKPVVVINGLKAVREVLVNCGEDTADRPPVPIFNHVGFGHNSQGVAFARYGPQWREQRRFCVSTMRDFGVGKKSLEQWVTEEAGHLCDAFTQEAGHPFNPTTLLNKSVCNVISSLIYAHRFDYEDPFFNSLLKMLQESFGEDTGFIAEVLNAVPVLLRIPGLPGKAFPKLTAFMDSLYKMLIEHKTTWDPAQPPRGLTDAFLAEVEKAKGRPESSFNDENLRMVVADMFIAGMVTTSTTLSWALLLMILHPDVQSRVQQEIDDVIGQVRRPEMADQARMPYTNAVIHEVQRFGDIAPVNIPHMTSHDVEVQGFLIPKGTTLIPNLSSVLKDETVWEKPLHFHPEHFLDAQGRFVKHEAFMPFSAGRRACLGEPLARMELFLFFTCLLQRFSFSVPAGQPRPSDQGIFALPVTPTPYELCAVVR.

C446 serves as a coordination point for heme.

Belongs to the cytochrome P450 family. Heme is required as a cofactor. As to expression, expressed in liver, but not in kidney, small intestine, and brain.

It is found in the endoplasmic reticulum membrane. Its subcellular location is the microsome membrane. Its function is as follows. Has bufuralol 1'-hydroxylase and debrisoquine 4-hydroxylase activities. This is Cytochrome P450 2D27 (CYP2D27) from Mesocricetus auratus (Golden hamster).